The sequence spans 39 residues: Gas vesicle protein C (39 aa).

It belongs to the gas vesicle GvpC family.

It localises to the gas vesicle. Functionally, confers stability, involved in shaping gas vesicles, hollow, gas filled proteinaceous nanostructures. During planktonic growth they allow positioning of the organism at a favorable depth for light or nutrient acquisition. In Spirulina sp. (strain CCAP 1475/10), this protein is Gas vesicle protein C.